Reading from the N-terminus, the 76-residue chain is Large ribosomal subunit protein uL24 (76 aa).

It belongs to the universal ribosomal protein uL24 family. As to quaternary structure, part of the 50S ribosomal subunit.

Functionally, one of two assembly initiator proteins, it binds directly to the 5'-end of the 23S rRNA, where it nucleates assembly of the 50S subunit. One of the proteins that surrounds the polypeptide exit tunnel on the outside of the subunit. The sequence is that of Large ribosomal subunit protein uL24 from Wolinella succinogenes (strain ATCC 29543 / DSM 1740 / CCUG 13145 / JCM 31913 / LMG 7466 / NCTC 11488 / FDC 602W) (Vibrio succinogenes).